We begin with the raw amino-acid sequence, 367 residues long: Cobalt-precorrin-5B C(1)-methyltransferase (367 aa).

Belongs to the CbiD family.

It catalyses the reaction Co-precorrin-5B + S-adenosyl-L-methionine = Co-precorrin-6A + S-adenosyl-L-homocysteine. Its pathway is cofactor biosynthesis; adenosylcobalamin biosynthesis; cob(II)yrinate a,c-diamide from sirohydrochlorin (anaerobic route): step 6/10. Functionally, catalyzes the methylation of C-1 in cobalt-precorrin-5B to form cobalt-precorrin-6A. The polypeptide is Cobalt-precorrin-5B C(1)-methyltransferase (Thermosynechococcus vestitus (strain NIES-2133 / IAM M-273 / BP-1)).